The primary structure comprises 332 residues: NAD-dependent protein deacetylase hst2 (332 aa).

The Deacetylase sirtuin-type domain occupies 7 to 269 (KHVDSSKHLE…RALCKLLGWS (263 aa)). NAD(+) is bound by residues 35–55 (GAGISTAAGIPDFRSPETGIY) and 118–121 (QNID). The active-site Proton acceptor is His-138. 4 residues coordinate Zn(2+): Cys-146, Cys-149, Cys-170, and Cys-173. Residues 210–212 (GTS), 235–237 (NRE), and Cys-255 contribute to the NAD(+) site.

The protein belongs to the sirtuin family. Class I subfamily. Zn(2+) serves as cofactor.

The protein localises to the cytoplasm. It is found in the nucleus. It catalyses the reaction N(6)-acetyl-L-lysyl-[protein] + NAD(+) + H2O = 2''-O-acetyl-ADP-D-ribose + nicotinamide + L-lysyl-[protein]. NAD-dependent histone deacetylase, which could function in telomeric silencing, cell cycle progression and chromosome stability. The sequence is that of NAD-dependent protein deacetylase hst2 (hst2) from Schizosaccharomyces pombe (strain 972 / ATCC 24843) (Fission yeast).